The sequence spans 539 residues: Kynureninase 2 (539 aa).

The segment at 60 to 87 is disordered; the sequence is DGGVAGETKEPRVPNGVSSATKPNGTVN. A compositionally biased stretch (polar residues) spans 75 to 87; the sequence is GVSSATKPNGTVN. Pyridoxal 5'-phosphate contacts are provided by residues L171, T172, 199-202, D290, H293, and Y315; that span reads FPSD. K316 carries the post-translational modification N6-(pyridoxal phosphate)lysine. Positions 340–352 are enriched in gly residues; it reads GGGGSGGVGGGRG. The disordered stretch occupies residues 340–363; the sequence is GGGGSGGVGGGRGEGGDGDGGDGG. Pyridoxal 5'-phosphate-binding residues include W379 and N407.

Belongs to the kynureninase family. In terms of assembly, homodimer. Pyridoxal 5'-phosphate is required as a cofactor.

The protein resides in the cytoplasm. It catalyses the reaction L-kynurenine + H2O = anthranilate + L-alanine + H(+). The catalysed reaction is 3-hydroxy-L-kynurenine + H2O = 3-hydroxyanthranilate + L-alanine + H(+). Its pathway is amino-acid degradation; L-kynurenine degradation; L-alanine and anthranilate from L-kynurenine: step 1/1. It functions in the pathway cofactor biosynthesis; NAD(+) biosynthesis; quinolinate from L-kynurenine: step 2/3. Its function is as follows. Catalyzes the cleavage of L-kynurenine (L-Kyn) and L-3-hydroxykynurenine (L-3OHKyn) into anthranilic acid (AA) and 3-hydroxyanthranilic acid (3-OHAA), respectively. This Chaetomium globosum (strain ATCC 6205 / CBS 148.51 / DSM 1962 / NBRC 6347 / NRRL 1970) (Soil fungus) protein is Kynureninase 2.